Reading from the N-terminus, the 340-residue chain is Manganese-dependent ADP-ribose/CDP-alcohol diphosphatase (340 aa).

N-acetylmethionine is present on Met1. Residues Asp25, Gln27, Asp74, Asn110, His241, His278, and His280 each coordinate Zn(2+).

It belongs to the ADPRibase-Mn family. As to quaternary structure, monomer. Mg(2+) is required as a cofactor.

The enzyme catalyses CDP-choline + H2O = phosphocholine + CMP + 2 H(+). It catalyses the reaction ADP-D-ribose + H2O = D-ribose 5-phosphate + AMP + 2 H(+). The catalysed reaction is CDP-glycerol + H2O = sn-glycerol 3-phosphate + CMP + 2 H(+). Its function is as follows. Hydrolyzes ADP-ribose, IDP-ribose, CDP-glycerol, CDP-choline and CDP-ethanolamine, but not other non-reducing ADP-sugars or CDP-glucose. May be involved in immune cell signaling as suggested by the second-messenger role of ADP-ribose, which activates TRPM2 as a mediator of oxidative/nitrosative stress. The chain is Manganese-dependent ADP-ribose/CDP-alcohol diphosphatase (Adprm) from Mus musculus (Mouse).